The sequence spans 429 residues: Protein S-Myc (429 aa).

Position 36 is a phosphotyrosine; by Tyr-kinases (Tyr36). Residues 301–325 are disordered; it reads PLPYAEDARPLKKPRSQDPLGPLKC. Positions 346 to 398 constitute a bHLH domain; that stretch reads ERRRNHNRMERQRRDIMRSSFLNLRDLVPELVHNEKAAKVVILKKATEYIHTL. Positions 398–419 are leucine-zipper; the sequence is LQTDESKLLVEREKLYERKQQL.

As to quaternary structure, efficient DNA binding requires dimerization with another bHLH protein.

The protein localises to the nucleus. Its function is as follows. Has apoptosis-inducing activity. The protein is Protein S-Myc (Mycs) of Rattus norvegicus (Rat).